Here is a 284-residue protein sequence, read N- to C-terminus: Small ribosomal subunit protein uS5y/uS5u/uS5v (284 aa).

Residues 1-19 show a composition bias toward basic and acidic residues; sequence MAERGGESGAERGGDRGDF. Residues 1 to 51 are disordered; the sequence is MAERGGESGAERGGDRGDFGRGFGGGRGGGRGRDRGPRGRGRRGGRASEET. Residues 20–29 are compositionally biased toward gly residues; that stretch reads GRGFGGGRGG. The S5 DRBM domain maps to 95-158; sequence LKDEVMKIMP…ILAKLSVVPV (64 aa).

Belongs to the universal ribosomal protein uS5 family.

The sequence is that of Small ribosomal subunit protein uS5y/uS5u/uS5v (RPS2B) from Arabidopsis thaliana (Mouse-ear cress).